The sequence spans 289 residues: Ribosomal RNA small subunit methyltransferase H (289 aa).

S-adenosyl-L-methionine contacts are provided by residues 40–42 (GGH), Asp60, Phe84, Asp106, and Gln113.

The protein belongs to the methyltransferase superfamily. RsmH family.

It localises to the cytoplasm. It carries out the reaction cytidine(1402) in 16S rRNA + S-adenosyl-L-methionine = N(4)-methylcytidine(1402) in 16S rRNA + S-adenosyl-L-homocysteine + H(+). Specifically methylates the N4 position of cytidine in position 1402 (C1402) of 16S rRNA. This chain is Ribosomal RNA small subunit methyltransferase H, found in Haemophilus influenzae (strain PittGG).